Consider the following 348-residue polypeptide: Phosphate acyltransferase (348 aa).

Belongs to the PlsX family. In terms of assembly, homodimer. Probably interacts with PlsY.

It localises to the cytoplasm. The enzyme catalyses a fatty acyl-[ACP] + phosphate = an acyl phosphate + holo-[ACP]. It participates in lipid metabolism; phospholipid metabolism. Its function is as follows. Catalyzes the reversible formation of acyl-phosphate (acyl-PO(4)) from acyl-[acyl-carrier-protein] (acyl-ACP). This enzyme utilizes acyl-ACP as fatty acyl donor, but not acyl-CoA. The chain is Phosphate acyltransferase from Rhizobium etli (strain ATCC 51251 / DSM 11541 / JCM 21823 / NBRC 15573 / CFN 42).